Here is a 1006-residue protein sequence, read N- to C-terminus: Pentatricopeptide repeat-containing protein At1g30610, chloroplastic (1006 aa).

The transit peptide at 1–40 (MAVTISTNAFVNASLLDESRNSFWRPLFHQPYYNCRRVVR) directs the protein to the chloroplast. 2 disordered regions span residues 180–219 (LSKSGESSVTVPEDESFRKRYSKQEYHRSSDTSRGIERGS) and 248–292 (SSVA…IARG). Residues 194–219 (ESFRKRYSKQEYHRSSDTSRGIERGS) are compositionally biased toward basic and acidic residues. The segment covering 254 to 263 (WSNSGESSVT) has biased composition (polar residues). The span at 265 to 284 (PKDESFRRRYSKQEHHRSSD) shows a compositional bias: basic and acidic residues. PPR repeat units follow at residues 468 to 502 (TDYTVMRLIHFLGKLGNWRRVLQVIEWLQRQDRYK), 506 to 536 (IRIIYTTALNVLGKSRRPVEALNVFHAMLLQ), 542 to 572 (DMVAYRSIAVTLGQAGHIKELFYVIDTMRSP), 592 to 626 (DVVVYNAVLNACVQRKQWEGAFWVLQQLKQRGQKP), 627 to 657 (SPVTYGLIMEVMLACEKYNLVHEFFRKMQKS), 661 to 695 (NALAYRVLVNTLWKEGKSDEAVHTVEDMESRGIVG), 759 to 789 (LVVTYTGLIQACVDSGNIKNAAYIFDQMKKV), 793 to 827 (NLVTCNIMLKAYLQGGLFEEARELFQKMSEDGNHI), 840 to 874 (DTYTFNTMLDTCAEQEKWDDFGYAYREMLRHGYHF), and 875 to 909 (NAKRHLRMVLEASRAGKEEVMEATWEHMRRSNRIP).

It belongs to the PPR family. P subfamily.

It localises to the plastid. It is found in the chloroplast. May play a role in embryogenesis. This chain is Pentatricopeptide repeat-containing protein At1g30610, chloroplastic (EMB2279), found in Arabidopsis thaliana (Mouse-ear cress).